Here is a 105-residue protein sequence, read N- to C-terminus: uncharacterized protein (105 aa).

It is found in the cytoplasm. The protein localises to the nucleus. This is an uncharacterized protein from Schizosaccharomyces pombe (strain 972 / ATCC 24843) (Fission yeast).